We begin with the raw amino-acid sequence, 619 residues long: 2-isopropylmalate synthase (619 aa).

One can recognise a Pyruvate carboxyltransferase domain in the interval 61–336; that stretch reads PRWLSTDLRD…SPNLDFSDLT (276 aa). The a divalent metal cation site is built by D70, H275, H277, and N311.

This sequence belongs to the alpha-IPM synthase/homocitrate synthase family. LeuA type 2 subfamily. In terms of assembly, homodimer. A divalent metal cation serves as cofactor.

It localises to the cytoplasm. The protein localises to the mitochondrion. The enzyme catalyses 3-methyl-2-oxobutanoate + acetyl-CoA + H2O = (2S)-2-isopropylmalate + CoA + H(+). Its pathway is amino-acid biosynthesis; L-leucine biosynthesis; L-leucine from 3-methyl-2-oxobutanoate: step 1/4. Catalyzes the condensation of the acetyl group of acetyl-CoA with 3-methyl-2-oxobutanoate (2-oxoisovalerate) to form 3-carboxy-3-hydroxy-4-methylpentanoate (2-isopropylmalate). The protein is 2-isopropylmalate synthase (LEU4) of Saccharomyces cerevisiae (strain ATCC 204508 / S288c) (Baker's yeast).